Consider the following 488-residue polypeptide: MVNQDISKLSLNECPGSVIVISNRLPVTIKKDEKTGEYEYSMSSGGLVTALQGLKKSTTFQWYGWPGLEVPDEDKAKVKRELLEKFNAIPIFLSDEVADLHYNGFSNSILWPLFHYHPGEITFDDTAWLAYNEANMAFADEIEGNINDNDVVWVHDYHLMLLPEMIRQRVIAKKLKNIKIGWFLHTPFPSSEIYRILPVRQEILKGVLSCDLIGFHTYDYARHFLSAVQRILNVNTLPNGVEFDGRFVNVGAFPIGIDVETFTEGLKQDAVIKRIKELKESFKGCKIIIGVDRLDYIKGVPQKLHALEVFLGAHPEWIGKVVLVQVAVPSRGDVEEYQYLRSVVNELVGRINGQFGTAEFVPIHFMHRSIPFQELISLYAVSDVCLVSSTRDGMNLVSYEYISCQEEKKGTLILSEFTGAAQSLNGALIVNPWNTDDLAESINEALTVPEEKRAANWEKLYKYISKYTSAFWGENFVHELYRLGSSNN.

Residues Tyr102 and Asp156 each coordinate D-glucose 6-phosphate. UDP contacts are provided by Arg293 and Lys298. Residues Arg293 and Lys298 each contribute to the UDP-alpha-D-glucose site. Arg331 contributes to the D-glucose 6-phosphate binding site. UDP-binding positions include Ile370 and 396 to 400; that span reads LVSYE. Residues Ile370 and 392–400 each bind UDP-alpha-D-glucose; that span reads DGMNLVSYE.

The protein belongs to the glycosyltransferase 20 family. As to quaternary structure, trehalose synthase/phosphatase complex contains three or four polypeptides of 56 kDa (TPS1), 102 kDa (TPS2), 115 kDa (TPS3) and 123 kDa (TSL1).

It catalyses the reaction D-glucose 6-phosphate + UDP-alpha-D-glucose = alpha,alpha-trehalose 6-phosphate + UDP + H(+). It functions in the pathway carbohydrate biosynthesis. Synthase catalytic subunit of the trehalose synthase complex that catalyzes the production of trehalose from glucose-6-phosphate and UDP-alpha-D-glucose in a two step process. Can function independently of the complex. This chain is Alpha,alpha-trehalose-phosphate synthase [UDP-forming] 56 kDa subunit, found in Kluyveromyces lactis (strain ATCC 8585 / CBS 2359 / DSM 70799 / NBRC 1267 / NRRL Y-1140 / WM37) (Yeast).